We begin with the raw amino-acid sequence, 579 residues long: Glycine--tRNA ligase (579 aa).

Glutamate 175 provides a ligand contact to glycine. ATP is bound by residues 207–209 (RNE) and 218–219 (RV). Glutamate 226 contributes to the glycine binding site. Residue 327-328 (EC) participates in ATP binding. Residue 442–444 (EPS) participates in glycine binding. Arginine 449 serves as a coordination point for ATP.

This sequence belongs to the class-II aminoacyl-tRNA synthetase family. In terms of assembly, homodimer.

It carries out the reaction tRNA(Gly) + glycine + ATP = glycyl-tRNA(Gly) + AMP + diphosphate. The enzyme catalyses 2 ATP + H(+) = P(1),P(4)-bis(5'-adenosyl) tetraphosphate + diphosphate. Its function is as follows. Catalyzes the ATP-dependent ligation of glycine to the 3'-end of its cognate tRNA, via the formation of an aminoacyl-adenylate intermediate (Gly-AMP). Also produces diadenosine tetraphosphate (Ap4A), a universal pleiotropic signaling molecule needed for cell regulation pathways, by direct condensation of 2 ATPs. Thereby, may play a special role in Ap4A homeostasis. This is Glycine--tRNA ligase from Encephalitozoon cuniculi (strain GB-M1) (Microsporidian parasite).